We begin with the raw amino-acid sequence, 651 residues long: DNA ligase (651 aa).

NAD(+) is bound by residues 30–34, 79–80, and Glu105; these read DEEYD and SM. Lys107 acts as the N6-AMP-lysine intermediate in catalysis. 3 residues coordinate NAD(+): Arg128, Glu162, and Lys301. Residues Cys395, Cys398, Cys411, and Cys416 each coordinate Zn(2+). The BRCT domain maps to 570–651; the sequence is ALNENISNKT…NALLGGDDEV (82 aa).

This sequence belongs to the NAD-dependent DNA ligase family. LigA subfamily. Mg(2+) is required as a cofactor. Mn(2+) serves as cofactor.

The catalysed reaction is NAD(+) + (deoxyribonucleotide)n-3'-hydroxyl + 5'-phospho-(deoxyribonucleotide)m = (deoxyribonucleotide)n+m + AMP + beta-nicotinamide D-nucleotide.. DNA ligase that catalyzes the formation of phosphodiester linkages between 5'-phosphoryl and 3'-hydroxyl groups in double-stranded DNA using NAD as a coenzyme and as the energy source for the reaction. It is essential for DNA replication and repair of damaged DNA. This is DNA ligase from Campylobacter lari (strain RM2100 / D67 / ATCC BAA-1060).